A 69-amino-acid polypeptide reads, in one-letter code: Cytochrome b-c1 complex subunit 6-1, mitochondrial (69 aa).

Cystine bridges form between Cys17–Cys59 and Cys31–Cys45.

This sequence belongs to the UQCRH/QCR6 family. In terms of assembly, component of the ubiquinol-cytochrome c oxidoreductase (cytochrome b-c1 complex, complex III, CIII), a multisubunit enzyme composed of 10 subunits. The complex is composed of 3 respiratory subunits cytochrome b (MT-CYB), cytochrome c1 (CYC1-1 or CYC1-2) and Rieske protein (UCR1-1 or UCR1-2), 2 core protein subunits MPPalpha1 (or MPPalpha2) and MPPB, and 5 low-molecular weight protein subunits QCR7-1 (or QCR7-2), UCRQ-1 (or UCRQ-2), QCR9, UCRY and probably QCR6-1 (or QCR6-2). The complex exists as an obligatory dimer and forms supercomplexes (SCs) in the inner mitochondrial membrane with NADH-ubiquinone oxidoreductase (complex I, CI), resulting in different assemblies (supercomplexes SCI(1)III(2) and SCI(2)III(4)).

The protein resides in the mitochondrion inner membrane. In terms of biological role, component of the ubiquinol-cytochrome c oxidoreductase, a multisubunit transmembrane complex that is part of the mitochondrial electron transport chain which drives oxidative phosphorylation. The respiratory chain contains 3 multisubunit complexes succinate dehydrogenase (complex II, CII), ubiquinol-cytochrome c oxidoreductase (cytochrome b-c1 complex, complex III, CIII) and cytochrome c oxidase (complex IV, CIV), that cooperate to transfer electrons derived from NADH and succinate to molecular oxygen, creating an electrochemical gradient over the inner membrane that drives transmembrane transport and the ATP synthase. The cytochrome b-c1 complex catalyzes electron transfer from ubiquinol to cytochrome c, linking this redox reaction to translocation of protons across the mitochondrial inner membrane, with protons being carried across the membrane as hydrogens on the quinol. In the process called Q cycle, 2 protons are consumed from the matrix, 4 protons are released into the intermembrane space and 2 electrons are passed to cytochrome c. The sequence is that of Cytochrome b-c1 complex subunit 6-1, mitochondrial (QCR6-1) from Arabidopsis thaliana (Mouse-ear cress).